Reading from the N-terminus, the 269-residue chain is Energy-coupling factor transporter ATP-binding protein EcfA1 (269 aa).

The region spanning 8-242 (IVFKNVSFQY…AEELTRIGLD (235 aa)) is the ABC transporter domain. 42–49 (GHNGSGKS) serves as a coordination point for ATP.

Belongs to the ABC transporter superfamily. Energy-coupling factor EcfA family. As to quaternary structure, forms a stable energy-coupling factor (ECF) transporter complex composed of 2 membrane-embedded substrate-binding proteins (S component), 2 ATP-binding proteins (A component) and 2 transmembrane proteins (T component).

The protein resides in the cell membrane. ATP-binding (A) component of a common energy-coupling factor (ECF) ABC-transporter complex. Unlike classic ABC transporters this ECF transporter provides the energy necessary to transport a number of different substrates. In Staphylococcus aureus (strain Mu50 / ATCC 700699), this protein is Energy-coupling factor transporter ATP-binding protein EcfA1.